The primary structure comprises 940 residues: Isoleucine--tRNA ligase (940 aa).

Residues 58–68 (PYANGSIHIGH) carry the 'HIGH' region motif. E564 contacts L-isoleucyl-5'-AMP. The 'KMSKS' region motif lies at 605-609 (KMSKS). An ATP-binding site is contributed by K608. Positions 903, 906, 923, and 926 each coordinate Zn(2+).

The protein belongs to the class-I aminoacyl-tRNA synthetase family. IleS type 1 subfamily. In terms of assembly, monomer. Zn(2+) serves as cofactor.

The protein resides in the cytoplasm. The enzyme catalyses tRNA(Ile) + L-isoleucine + ATP = L-isoleucyl-tRNA(Ile) + AMP + diphosphate. In terms of biological role, catalyzes the attachment of isoleucine to tRNA(Ile). As IleRS can inadvertently accommodate and process structurally similar amino acids such as valine, to avoid such errors it has two additional distinct tRNA(Ile)-dependent editing activities. One activity is designated as 'pretransfer' editing and involves the hydrolysis of activated Val-AMP. The other activity is designated 'posttransfer' editing and involves deacylation of mischarged Val-tRNA(Ile). This chain is Isoleucine--tRNA ligase, found in Shewanella putrefaciens (strain CN-32 / ATCC BAA-453).